We begin with the raw amino-acid sequence, 331 residues long: tRNA N6-adenosine threonylcarbamoyltransferase (331 aa).

Residues histidine 109, histidine 113, and tyrosine 130 each coordinate Fe cation. Substrate contacts are provided by residues 130–134 (YLSGG), aspartate 162, aspartate 183, and serine 262. Position 290 (aspartate 290) interacts with Fe cation.

It belongs to the KAE1 / TsaD family. It depends on Fe(2+) as a cofactor.

It is found in the cytoplasm. The enzyme catalyses L-threonylcarbamoyladenylate + adenosine(37) in tRNA = N(6)-L-threonylcarbamoyladenosine(37) in tRNA + AMP + H(+). Required for the formation of a threonylcarbamoyl group on adenosine at position 37 (t(6)A37) in tRNAs that read codons beginning with adenine. Is probably involved in the transfer of the threonylcarbamoyl moiety of threonylcarbamoyl-AMP (TC-AMP) to the N6 group of A37. The polypeptide is tRNA N6-adenosine threonylcarbamoyltransferase (Saccharolobus islandicus (strain Y.G.57.14 / Yellowstone #1) (Sulfolobus islandicus)).